The sequence spans 196 residues: Putative NADH dehydrogenase/NAD(P)H nitroreductase XCV0587 (196 aa).

Belongs to the nitroreductase family. HadB/RutE subfamily. The cofactor is FMN.

The protein is Putative NADH dehydrogenase/NAD(P)H nitroreductase XCV0587 of Xanthomonas euvesicatoria pv. vesicatoria (strain 85-10) (Xanthomonas campestris pv. vesicatoria).